A 339-amino-acid chain; its full sequence is Lipopolysaccharide glucosyltransferase WaaO (339 aa).

Residues 34–39 and 131–132 each bind UDP; these read GTDKNF and DA. Residues D131 and D133 each coordinate Mg(2+). 2 short sequence motifs (DXD) span residues 131–133 and 220–222; these read DAD and DQD. H265 contributes to the Mg(2+) binding site. 265-271 provides a ligand contact to UDP; it reads HYIGPTK.

This sequence belongs to the glycosyltransferase 8 family. The cofactor is Mg(2+).

It catalyses the reaction UDP-glucose + lipopolysaccharide = UDP + alpha-D-glucosyl-lipopolysaccharide.. The enzyme catalyses alpha-D-Gal-(1-&gt;6)-alpha-D-Glc-(1-&gt;3)-[L-alpha-D-Hep-(1-&gt;7)]-4-O-PO3(2-)-L-alpha-D-Hep-(1-&gt;3)-4-O-PO3(2-)-L-alpha-D-Hep-(1-&gt;5)-[alpha-Kdo-(2-&gt;4)]-alpha-Kdo-(2-&gt;6)-lipid A + UDP-alpha-D-glucose = alpha-D-Glc-(1-&gt;3)-[alpha-D-Gal-(1-&gt;6)]-alpha-D-Glc-(1-&gt;3)-[L-alpha-D-Hep-(1-&gt;7)]-4-O-PO3(2-)-L-alpha-D-Hep-(1-&gt;3)-4-O-PO3(2-)-L-alpha-D-Hep-(1-&gt;5)-[alpha-Kdo-(2-&gt;4)]-alpha-Kdo-(2-&gt;6)-lipid A + UDP + H(+). The protein operates within bacterial outer membrane biogenesis; LPS core biosynthesis. Functionally, glucosyltransferase involved in the biosynthesis of the core oligosaccharide region of lipopolysaccharide (LPS). Catalyzes the addition of a second glucose (glucose II) to the first outer-core glucose (glucose I). In vitro, can add multiple glucose residues to its lipid acceptor. Activity does not require the branched galactose added by WaaB, but it is higher in the presence of this branched galactose. In the absence of a lipid acceptor, can hydrolyze UDP-glucose, but not UDP-galactose. This chain is Lipopolysaccharide glucosyltransferase WaaO, found in Escherichia coli (strain K12).